The sequence spans 270 residues: 3-methyl-2-oxobutanoate hydroxymethyltransferase (270 aa).

Positions 50 and 89 each coordinate Mg(2+). 3-methyl-2-oxobutanoate-binding positions include 50-51 (DS), D89, and K118. E120 contributes to the Mg(2+) binding site. The Proton acceptor role is filled by E187.

It belongs to the PanB family. In terms of assembly, homodecamer; pentamer of dimers. It depends on Mg(2+) as a cofactor.

It localises to the cytoplasm. The catalysed reaction is 3-methyl-2-oxobutanoate + (6R)-5,10-methylene-5,6,7,8-tetrahydrofolate + H2O = 2-dehydropantoate + (6S)-5,6,7,8-tetrahydrofolate. The protein operates within cofactor biosynthesis; (R)-pantothenate biosynthesis; (R)-pantoate from 3-methyl-2-oxobutanoate: step 1/2. In terms of biological role, catalyzes the reversible reaction in which hydroxymethyl group from 5,10-methylenetetrahydrofolate is transferred onto alpha-ketoisovalerate to form ketopantoate. In Helicobacter pylori (strain HPAG1), this protein is 3-methyl-2-oxobutanoate hydroxymethyltransferase.